Consider the following 879-residue polypeptide: DNA methyltransferase A (879 aa).

The protein belongs to the methyltransferase superfamily.

The catalysed reaction is a 2'-deoxyadenosine in DNA + S-adenosyl-L-methionine = an N(6)-methyl-2'-deoxyadenosine in DNA + S-adenosyl-L-homocysteine + H(+). Its function is as follows. Recognizes the double-stranded sequence 5'-GACGAG-3' and methylates A-5, yielding m6A. m6A methylation functions as a transcriptional modifier, promoting transcription of a number of genes (at least scpA, hbs, rnhC, yumC and zapA). One studied mechanism is via transcriptional repressor ScoC (also called hpr) which binds to non-methylated scpA promoter; when the m6A target is methylated ScoC no longer binds and scpA transcription is up-regulated. Other mechanisms for gene expression regulation probably exist. Binds DNA with and without the target sequence. Although it resembles a restriction-modification system, it does not have detectable endonuclease activity under tested conditions. A gamma subtype methylase. This Bacillus subtilis (strain 168) protein is DNA methyltransferase A.